The primary structure comprises 612 residues: Autophagy-related protein 28 (612 aa).

Residues 44 to 72 (NHMEEQSPKFESSFPRRTSEGPVDDVGKS) form a disordered region. A coiled-coil region spans residues 214–296 (YQAKAQDKQA…QRTLKNECFQ (83 aa)).

This sequence belongs to the ATG28 family. Interacts with ATG35.

It localises to the cytoplasm. It is found in the vacuole membrane. The protein resides in the cytoplasmic vesicle membrane. Required for the autophagic degradation of peroxisomes called pexophagy, but not essential for general autophagy. Involved in resistance to elevated pH. This chain is Autophagy-related protein 28 (ATG28), found in Komagataella phaffii (strain GS115 / ATCC 20864) (Yeast).